A 258-amino-acid chain; its full sequence is Large ribosomal subunit protein uL15c (258 aa).

Residues 1–65 (MSAASLIPVS…NVKSSGENVR (65 aa)) constitute a chloroplast transit peptide. The interval 67–90 (RLDNLGPQPGSRKRPKRKGRGIAA) is disordered. Residues 77–86 (SRKRPKRKGR) show a composition bias toward basic residues.

It belongs to the universal ribosomal protein uL15 family. In terms of assembly, part of the 50S ribosomal subunit.

The protein localises to the plastid. The protein resides in the chloroplast. The protein is Large ribosomal subunit protein uL15c (RPL15) of Pisum sativum (Garden pea).